Here is a 558-residue protein sequence, read N- to C-terminus: Germacrene A synthase short form (558 aa).

Residues Asp311, Asp315, Asp455, Thr459, and Glu463 each contribute to the Mg(2+) site. A DDXXD motif motif is present at residues 311 to 315 (DDTYD).

It belongs to the terpene synthase family. It depends on Mg(2+) as a cofactor. As to expression, expressed in roots and in green and etiolated seedlings.

It carries out the reaction (2E,6E)-farnesyl diphosphate = (+)-(R)-germacrene A + diphosphate. It participates in secondary metabolite biosynthesis; terpenoid biosynthesis. In terms of biological role, involved in sesquiterpene lactone biosynthesis. Produces exclusively (+)-germacrene A. This chain is Germacrene A synthase short form, found in Cichorium intybus (Chicory).